Here is a 532-residue protein sequence, read N- to C-terminus: CTP synthase (532 aa).

The interval 1-267 (MTKFIFVTGG…DDIVLKILGL (267 aa)) is amidoligase domain. Ser13 lines the CTP pocket. Ser13 contributes to the UTP binding site. 14–19 (SLGKGI) is an ATP binding site. Tyr54 provides a ligand contact to L-glutamine. Position 71 (Asp71) interacts with ATP. Residues Asp71 and Glu141 each contribute to the Mg(2+) site. Residues 148-150 (DIE), 188-193 (KTKPTQ), and Lys224 each bind CTP. UTP is bound by residues 188–193 (KTKPTQ) and Lys224. A Glutamine amidotransferase type-1 domain is found at 292-532 (EIAIVGKYVE…EFVKATLANR (241 aa)). Gly354 provides a ligand contact to L-glutamine. Catalysis depends on Cys381, which acts as the Nucleophile; for glutamine hydrolysis. L-glutamine-binding positions include 382–385 (LGMQ), Glu405, and Arg462. Active-site residues include His507 and Glu509.

This sequence belongs to the CTP synthase family. Homotetramer.

It carries out the reaction UTP + L-glutamine + ATP + H2O = CTP + L-glutamate + ADP + phosphate + 2 H(+). The enzyme catalyses L-glutamine + H2O = L-glutamate + NH4(+). It catalyses the reaction UTP + NH4(+) + ATP = CTP + ADP + phosphate + 2 H(+). The protein operates within pyrimidine metabolism; CTP biosynthesis via de novo pathway; CTP from UDP: step 2/2. Its activity is regulated as follows. Allosterically activated by GTP, when glutamine is the substrate; GTP has no effect on the reaction when ammonia is the substrate. The allosteric effector GTP functions by stabilizing the protein conformation that binds the tetrahedral intermediate(s) formed during glutamine hydrolysis. Inhibited by the product CTP, via allosteric rather than competitive inhibition. In terms of biological role, catalyzes the ATP-dependent amination of UTP to CTP with either L-glutamine or ammonia as the source of nitrogen. Regulates intracellular CTP levels through interactions with the four ribonucleotide triphosphates. The protein is CTP synthase of Desulfitobacterium hafniense (strain Y51).